The sequence spans 630 residues: Pentatricopeptide repeat-containing protein At1g26460, mitochondrial (630 aa).

Residues 1–115 constitute a mitochondrion transit peptide; that stretch reads MASHLFTRSR…RALSETLDMN (115 aa). A disordered region spans residues 42–79; sequence LLATESTDHDPSNHQSTSTPLPPNPATGSPLYQENWRS. The span at 67-77 shows a compositional bias: polar residues; that stretch reads ATGSPLYQENW. 6 PPR repeats span residues 154–189, 190–224, 227–261, 468–503, 504–538, and 539–573; these read DVNLYNHYLRANLMMGASAGDMLDLVAPMEEFSVEP, NTASYNLVLKAMYQARETEAAMKLLERMLLLGKDS, DDESYDLVIGMHFGVGKNDEAMKVMDTALKSGYML, SVAALNCIILGCANTWDLDRAYQTFEAISASFGLTP, NIDSYNALLYAFGKVKKTFEATNVFEHLVSIGVKP, and DSRTYSLLVDAHLINRDPKSALTVVDDMIKAGFEP.

The protein belongs to the PPR family. P subfamily.

The protein resides in the mitochondrion. The protein is Pentatricopeptide repeat-containing protein At1g26460, mitochondrial of Arabidopsis thaliana (Mouse-ear cress).